Here is a 310-residue protein sequence, read N- to C-terminus: Glucan endo-1,3-beta-glucosidase GI (310 aa).

Glu96 serves as the catalytic Proton donor. The active-site Nucleophile is Glu234.

Belongs to the glycosyl hydrolase 17 family. As to quaternary structure, monomer. In terms of tissue distribution, young leaves and roots.

The catalysed reaction is Hydrolysis of (1-&gt;3)-beta-D-glucosidic linkages in (1-&gt;3)-beta-D-glucans.. May provide a degree of protection against microbial invasion of germinated barley grain through its ability to degrade fungal cell wall polysaccharides. Does not hydrolyze (1,3;1,4)-beta-D-glucans, (1,6)-beta-D-glucan, CM-cellulose, insoluble (1,3)-beta-D-glucans or aryl beta-D-glycosides. The polypeptide is Glucan endo-1,3-beta-glucosidase GI (Hordeum vulgare (Barley)).